The primary structure comprises 356 residues: Protein RecA (356 aa).

71-78 is a binding site for ATP; sequence GPESSGKT.

The protein belongs to the RecA family.

The protein localises to the cytoplasm. Functionally, can catalyze the hydrolysis of ATP in the presence of single-stranded DNA, the ATP-dependent uptake of single-stranded DNA by duplex DNA, and the ATP-dependent hybridization of homologous single-stranded DNAs. It interacts with LexA causing its activation and leading to its autocatalytic cleavage. This is Protein RecA from Synechococcus elongatus (strain ATCC 33912 / PCC 7942 / FACHB-805) (Anacystis nidulans R2).